The following is an 83-amino-acid chain: Cytochrome b559 subunit alpha (83 aa).

A helical transmembrane segment spans residues V21–W35. H23 contacts heme.

This sequence belongs to the PsbE/PsbF family. In terms of assembly, heterodimer of an alpha subunit and a beta subunit. PSII is composed of 1 copy each of membrane proteins PsbA, PsbB, PsbC, PsbD, PsbE, PsbF, PsbH, PsbI, PsbJ, PsbK, PsbL, PsbM, PsbT, PsbX, PsbY, PsbZ, Psb30/Ycf12, at least 3 peripheral proteins of the oxygen-evolving complex and a large number of cofactors. It forms dimeric complexes. Requires heme b as cofactor.

The protein resides in the plastid. Its subcellular location is the chloroplast thylakoid membrane. In terms of biological role, this b-type cytochrome is tightly associated with the reaction center of photosystem II (PSII). PSII is a light-driven water:plastoquinone oxidoreductase that uses light energy to abstract electrons from H(2)O, generating O(2) and a proton gradient subsequently used for ATP formation. It consists of a core antenna complex that captures photons, and an electron transfer chain that converts photonic excitation into a charge separation. The protein is Cytochrome b559 subunit alpha of Staurastrum punctulatum (Green alga).